Reading from the N-terminus, the 486-residue chain is ATP synthase subunit beta (486 aa).

An ATP-binding site is contributed by 164 to 171 (GGAGVGKT).

The protein belongs to the ATPase alpha/beta chains family. F-type ATPases have 2 components, CF(1) - the catalytic core - and CF(0) - the membrane proton channel. CF(1) has five subunits: alpha(3), beta(3), gamma(1), delta(1), epsilon(1). CF(0) has four main subunits: a(1), b(1), b'(1) and c(9-12).

The protein localises to the cellular thylakoid membrane. The catalysed reaction is ATP + H2O + 4 H(+)(in) = ADP + phosphate + 5 H(+)(out). Functionally, produces ATP from ADP in the presence of a proton gradient across the membrane. The catalytic sites are hosted primarily by the beta subunits. This is ATP synthase subunit beta from Prochlorococcus marinus (strain MIT 9515).